We begin with the raw amino-acid sequence, 309 residues long: Low density lipoprotein receptor adapter protein 1-A (309 aa).

Residues Leu-41–Gln-195 enclose the PID domain. Residues Glu-179–Ser-199 form a disordered region. The Clathrin box signature appears at Leu-213 to Glu-217. The AP-2 complex binding stretch occupies residues Trp-250–Leu-277. Residues Glu-258–Arg-267 carry the [DE]-X(1,2)-F-X-X-[FL]-X-X-X-R motif motif.

As to quaternary structure, interacts (via PID domain) with ldlr (via NPXY motif). Binds to soluble clathrin trimers and to the adapter protein complex 2 (AP-2, beta 2 subunit). Binds to phosphoinositides, which regulate clathrin bud assembly at the cell surface. Interacts with the VLDL receptor (vldlr). Interacts with the vitellogenin receptor. As to expression, expressed at high level during oogenesis and embryogenesis. Found in the oocyte vegetal cortex. Found at low level in the adult liver and spleen. Found at very low level in testis and heart.

The protein resides in the cytoplasm. In terms of biological role, adapter protein (clathrin-associated sorting protein (CLASP)) required for efficient endocytosis of the LDL receptor (LDLR). Also involved in the vitellogenin receptor mediated endocytosis of nutrients during oogenesis. The polypeptide is Low density lipoprotein receptor adapter protein 1-A (Xenopus laevis (African clawed frog)).